Here is a 995-residue protein sequence, read N- to C-terminus: S1 RNA-binding domain-containing protein 1 (995 aa).

Residues 23 to 78 are disordered; sequence SFSELSSASEEDDKEDSAWEPQKKVPRSRKQPPPKESKPKRMPQVKKNAPQISDGS. Residue Lys84 forms a Glycyl lysine isopeptide (Lys-Gly) (interchain with G-Cter in SUMO2) linkage. The span at 116-132 shows a compositional bias: basic residues; the sequence is TKRKCAAQPHAVRRTKK. The disordered stretch occupies residues 116-164; sequence TKRKCAAQPHAVRRTKKLKVDEETSKASYLEGESNSSETPSTSTVWGGT. Lys134 participates in a covalent cross-link: Glycyl lysine isopeptide (Lys-Gly) (interchain with G-Cter in SUMO2). Low complexity predominate over residues 146-159; sequence EGESNSSETPSTST. Glycyl lysine isopeptide (Lys-Gly) (interchain with G-Cter in SUMO2) cross-links involve residues Lys166, Lys167, and Lys183. Residue Lys185 forms a Glycyl lysine isopeptide (Lys-Gly) (interchain with G-Cter in SUMO1); alternate linkage. Residue Lys185 forms a Glycyl lysine isopeptide (Lys-Gly) (interchain with G-Cter in SUMO2); alternate linkage. A coiled-coil region spans residues 258–288; sequence ADSLREVQQTLEELRAVAKKVHSTIQKIKKE. The residue at position 861 (Ser861) is a Phosphoserine. The 74-residue stretch at 919–992 folds into the S1 motif domain; sequence GTVLTGKVEN…PRSRITLDLI (74 aa). A Glycyl lysine isopeptide (Lys-Gly) (interchain with G-Cter in SUMO2) cross-link involves residue Lys955. Ser964 is subject to Phosphoserine.

This Pongo abelii (Sumatran orangutan) protein is S1 RNA-binding domain-containing protein 1 (SRBD1).